Reading from the N-terminus, the 299-residue chain is Probable lipid kinase YegS-like (299 aa).

A DAGKc domain is found at 2–133; that stretch reads ATFPASLLIL…IDIAQVNDKT (132 aa). ATP contacts are provided by residues Thr40, 66–72, and Thr95; that span reads GDGTINE. Residues Leu215, Asp218, and Leu220 each coordinate Mg(2+). Glu271 serves as the catalytic Proton acceptor.

It belongs to the diacylglycerol/lipid kinase family. YegS lipid kinase subfamily. It depends on Mg(2+) as a cofactor. Ca(2+) is required as a cofactor.

Its subcellular location is the cytoplasm. In terms of biological role, probably phosphorylates lipids; the in vivo substrate is unknown. The protein is Probable lipid kinase YegS-like of Citrobacter koseri (strain ATCC BAA-895 / CDC 4225-83 / SGSC4696).